Here is a 680-residue protein sequence, read N- to C-terminus: Penicillin-binding protein 2B (680 aa).

Over 1–8 (MRKFNSHS) the chain is Cytoplasmic. The chain crosses the membrane as a helical span at residues 9–29 (IPIRLNLLFSIVILLFMTIIG). Over 30–680 (RLLYMQVLNK…NLYQKYHPMN (651 aa)) the chain is Extracellular. Catalysis depends on S386, which acts as the Acyl-ester intermediate.

Belongs to the transpeptidase family. Interacts with MreC in the elongasome.

It is found in the cell membrane. Its function is as follows. A transpeptidase that forms peptide cross-links between adjacent glycan strands in cell wall peptidoglycan (PG). Part of the elongasome machinery that synthesizes peripheral PG. The protein is Penicillin-binding protein 2B of Streptococcus pneumoniae serotype 2 (strain D39 / NCTC 7466).